Reading from the N-terminus, the 635-residue chain is MDNLRLHPDTIQEIKQRIDIVEIIGDYVVLKKRGRDHLGLCPFHDEKSPSFSVSPAKQMYYCFGCGAGGNAFNFLMELGKRSFTDVALDLARRYQIQIQTLEPAQKQELQRQLSLREQLYEIMAVAAGFYHHTLFQPQGQEALTYLDQKRCLSSATIQEFQLGYAPAGWETLYRYLVEQKRYPVAAVEQAGLIKARQSGTGYYDQFRHRLMIPIRDVQGKTIAFGSRTLGNDEPKYLNSPETPLFHKSKTLFGLDQAKTAIQKVDEAILVEGYFDVIALHESGIKQTVAALGIALSRDQVQSLMRFSQSKQIIFNFDADKAGINATQRAIQEIEPLVYSGQVNLRILNLPAGKDADEFIHSSAENKEIYQTLVKQAPLWVDWQIQQLLKQKNLKDPLDFEQVARGMVDILKRLTDQNKRAYYLQLCGEILSQGDSRLISLQVNNLSSQLTYGDRPGKNGSRHWQAKDPTSSLLEKAEALLLKIYLHCPQERPTIDQILTENDLLFSFAHHRLLWQKIDQVREYFNLDSDPDNQLPLLVQLAYLEQEGDFNSVESLFQLTETSAEDLFRANLRIPEAIAIMEKVPWESYQKHCFGKLQQLDPRTQAEDFRYYQEQWQKAHQEIQRLESQRLNQPLN.

The CHC2-type zinc-finger motif lies at 41–65 (CPFHDEKSPSFSVSPAKQMYYCFGC). One can recognise a Toprim domain in the interval 265-348 (DEAILVEGYF…SGQVNLRILN (84 aa)). Mg(2+) is bound by residues Glu271, Asp317, and Asp319.

Belongs to the DnaG primase family. As to quaternary structure, monomer. Interacts with DnaB. Zn(2+) is required as a cofactor. Requires Mg(2+) as cofactor.

The catalysed reaction is ssDNA + n NTP = ssDNA/pppN(pN)n-1 hybrid + (n-1) diphosphate.. Its function is as follows. RNA polymerase that catalyzes the synthesis of short RNA molecules used as primers for DNA polymerase during DNA replication. This chain is DNA primase, found in Synechocystis sp. (strain ATCC 27184 / PCC 6803 / Kazusa).